The chain runs to 360 residues: MGSTAADMAASADEEACMYALQLVSSSILPMTLKNAIELGLLETLVAAGGKLLTPAEVAAKLPSTANPAAADMVDRMLRLLASYNVVSCTMEEGKDGRLSRRYRAAPVCKFLTPNEDGVSMAALALMNQDKVLMESWYYLKDAVLDGGIPFNKAYGMSAFEYHGTDPRFNRVFNEGMKNHSIIITKKLLEVYKGFEGLGTIVDVGGGVGATVGAITAAYPAIKGINFDLPHVISEAQPFPGVTHVGGDMFQKVPSGDAILMKWILHDWSDEHCATLLKNCYDALPAHGKVVLVECILPVNPEATPKAQGVFHVDMIMLAHNPGGRERYEREFEALAKGAGFKAIKTTYIYANAFAIEFTK.

127-133 (MNQDKVL) is a binding site for substrate. Positions 159–177 (AFEYHGTDPRFNRVFNEGM) are substrate binding. Residues G205, D228, D248, M249, and K262 each contribute to the S-adenosyl-L-methionine site. H266 functions as the Proton acceptor in the catalytic mechanism.

The protein belongs to the class I-like SAM-binding methyltransferase superfamily. Cation-independent O-methyltransferase family. COMT subfamily. As to quaternary structure, homodimer.

In terms of biological role, flavone-specific O-methyltransferase with a preference for flavones &gt; flavonols. Active with tricetin, luteolin, quercitin and eriodictyol. Very low activity with phenylpropanoids (5-hydroxyferulic acid and caffeic acid). Catalyzes the sequential O-methylation of tricetin via 3'-O-methyltricetin, 3',5'-O-methyltricetin to 3',4',5'-O-trimethyltricetin. The sequence is that of Flavone O-methyltransferase 1 (OMT1) from Triticum aestivum (Wheat).